Consider the following 159-residue polypeptide: 2-C-methyl-D-erythritol 2,4-cyclodiphosphate synthase (159 aa).

Positions 8 and 10 each coordinate a divalent metal cation. 4-CDP-2-C-methyl-D-erythritol 2-phosphate contacts are provided by residues 8-10 (DVH) and 34-35 (HS). Histidine 42 serves as a coordination point for a divalent metal cation. 4-CDP-2-C-methyl-D-erythritol 2-phosphate-binding positions include 56–58 (DIG), 61–65 (FPDTD), 100–106 (AQAPRML), 132–135 (TTTE), phenylalanine 139, and arginine 142.

It belongs to the IspF family. In terms of assembly, homotrimer. A divalent metal cation serves as cofactor.

It catalyses the reaction 4-CDP-2-C-methyl-D-erythritol 2-phosphate = 2-C-methyl-D-erythritol 2,4-cyclic diphosphate + CMP. It participates in isoprenoid biosynthesis; isopentenyl diphosphate biosynthesis via DXP pathway; isopentenyl diphosphate from 1-deoxy-D-xylulose 5-phosphate: step 4/6. Functionally, involved in the biosynthesis of isopentenyl diphosphate (IPP) and dimethylallyl diphosphate (DMAPP), two major building blocks of isoprenoid compounds. Catalyzes the conversion of 4-diphosphocytidyl-2-C-methyl-D-erythritol 2-phosphate (CDP-ME2P) to 2-C-methyl-D-erythritol 2,4-cyclodiphosphate (ME-CPP) with a corresponding release of cytidine 5-monophosphate (CMP). The protein is 2-C-methyl-D-erythritol 2,4-cyclodiphosphate synthase of Escherichia coli O6:K15:H31 (strain 536 / UPEC).